Consider the following 248-residue polypeptide: DNA repair protein RecO (248 aa).

Belongs to the RecO family.

Its function is as follows. Involved in DNA repair and RecF pathway recombination. In Rubrobacter xylanophilus (strain DSM 9941 / JCM 11954 / NBRC 16129 / PRD-1), this protein is DNA repair protein RecO.